We begin with the raw amino-acid sequence, 145 residues long: Large ribosomal subunit protein uL16 (145 aa).

It belongs to the universal ribosomal protein uL16 family. As to quaternary structure, part of the 50S ribosomal subunit.

Its function is as follows. Binds 23S rRNA and is also seen to make contacts with the A and possibly P site tRNAs. This chain is Large ribosomal subunit protein uL16, found in Shouchella clausii (strain KSM-K16) (Alkalihalobacillus clausii).